Reading from the N-terminus, the 950-residue chain is 5'-3' exoribonuclease 2 (950 aa).

A CCHC-type zinc finger spans residues P262 to G278. K286 carries the post-translational modification N6-acetyllysine. Residues K408–N508 are disordered. A compositionally biased stretch (basic residues) spans R416–K426. T439 is modified (phosphothreonine). The span at S445 to R458 shows a compositional bias: polar residues. A phosphoserine mark is found at S448, S471, S473, S475, S482, S487, S499, S501, and S678. Over residues N468–S482 the composition is skewed to low complexity. Residues R824, R847, and R851 each carry the asymmetric dimethylarginine; alternate modification. Omega-N-methylarginine; alternate occurs at positions 824, 847, and 851. R880 carries the post-translational modification Asymmetric dimethylarginine. Position 883 is an asymmetric dimethylarginine; alternate (R883). The residue at position 883 (R883) is an Omega-N-methylarginine; alternate. Residue R895 is modified to Omega-N-methylarginine. Positions M911–N950 are disordered. Residues P920–K937 show a composition bias toward basic and acidic residues. R946 is modified (asymmetric dimethylarginine; alternate). R946 carries the omega-N-methylarginine; alternate modification.

This sequence belongs to the 5'-3' exonuclease family. XRN2/RAT1 subfamily. Interacts with POLR2A and SMN1/SMN2. Interacts with CDKN2AIP and NKRF. Interacts with CDKN2AIPNL; the interaction is direct. Interacts with TRIM71 (via NHL repeats) in an RNA-dependent manner. Interacts with DHX34; the interaction is RNA-independent. As to expression, expressed in the spleen, thymus, prostate, testis, ovary, small intestine, colon, peripheral blood leukocytes, heart, brain, placenta, lung, liver, skeletal muscle, kidney, and pancreas. Isoform 2 is expressed predominantly in peripheral blood leukocytes.

The protein localises to the nucleus. Its subcellular location is the nucleolus. In terms of biological role, possesses 5'-&gt;3' exoribonuclease activity. May promote the termination of transcription by RNA polymerase II. During transcription termination, cleavage at the polyadenylation site liberates a 5' fragment which is subsequently processed to form the mature mRNA and a 3' fragment which remains attached to the elongating polymerase. The processive degradation of this 3' fragment by this protein may promote termination of transcription. Binds to RNA polymerase II (RNAp II) transcription termination R-loops formed by G-rich pause sites. This is 5'-3' exoribonuclease 2 (XRN2) from Homo sapiens (Human).